A 745-amino-acid polypeptide reads, in one-letter code: Serine/threonine-protein kinase GG21441 (745 aa).

The tract at residues 49 to 73 (RNQQQNVQKDFDSHNRDCDSPVSST) is disordered. The segment covering 57–67 (KDFDSHNRDCD) has biased composition (basic and acidic residues). Doublecortin domains are found at residues 159–245 (LRIK…VEYN) and 315–398 (RIVT…AEDF). One can recognise a Protein kinase domain in the interval 479-737 (YTLGRIIGDG…SEDILDHYWT (259 aa)). Residues 485–493 (IGDGNFAIV) and Lys-508 each bind ATP. Catalysis depends on Asp-600, which acts as the Proton acceptor.

It belongs to the protein kinase superfamily. CAMK Ser/Thr protein kinase family. CaMK subfamily.

It carries out the reaction L-seryl-[protein] + ATP = O-phospho-L-seryl-[protein] + ADP + H(+). The enzyme catalyses L-threonyl-[protein] + ATP = O-phospho-L-threonyl-[protein] + ADP + H(+). The sequence is that of Serine/threonine-protein kinase GG21441 from Drosophila erecta (Fruit fly).